The sequence spans 298 residues: tRNA-cytidine(32) 2-sulfurtransferase (298 aa).

A PP-loop motif motif is present at residues 48 to 53; that stretch reads SGGKDS. C123, C126, and C214 together coordinate [4Fe-4S] cluster.

Belongs to the TtcA family. Homodimer. Mg(2+) serves as cofactor. The cofactor is [4Fe-4S] cluster.

The protein resides in the cytoplasm. The enzyme catalyses cytidine(32) in tRNA + S-sulfanyl-L-cysteinyl-[cysteine desulfurase] + AH2 + ATP = 2-thiocytidine(32) in tRNA + L-cysteinyl-[cysteine desulfurase] + A + AMP + diphosphate + H(+). The protein operates within tRNA modification. In terms of biological role, catalyzes the ATP-dependent 2-thiolation of cytidine in position 32 of tRNA, to form 2-thiocytidine (s(2)C32). The sulfur atoms are provided by the cysteine/cysteine desulfurase (IscS) system. This Nitrosospira multiformis (strain ATCC 25196 / NCIMB 11849 / C 71) protein is tRNA-cytidine(32) 2-sulfurtransferase.